The primary structure comprises 254 residues: Fructose-1,6-bisphosphatase (254 aa).

Mg(2+) contacts are provided by Glu-68, Asp-84, Leu-86, and Asp-87. Substrate-binding positions include 87-89, Arg-171, Ile-176, and Arg-195; that span reads DGS. Residue Asp-202 participates in Mg(2+) binding.

It belongs to the inositol monophosphatase superfamily. FBPase class 4 family. As to quaternary structure, homodimer. Requires Mg(2+) as cofactor.

It carries out the reaction beta-D-fructose 1,6-bisphosphate + H2O = beta-D-fructose 6-phosphate + phosphate. Inhibited by Li(+), ADP, ATP and glucose-6-phosphate. Its function is as follows. Catalyzes the conversion of D-fructose 1,6-bisphosphate to D-fructose 6-phosphate. In vitro, also has weak activity with inositol-1-phosphate, glucose-1-phosphate and glycerol-2-phosphate. The protein is Fructose-1,6-bisphosphatase of Pyrococcus furiosus (strain ATCC 43587 / DSM 3638 / JCM 8422 / Vc1).